A 409-amino-acid polypeptide reads, in one-letter code: Cuticle-degrading serine protease (409 aa).

The signal sequence occupies residues 1 to 21; it reads MLTNGLISLLAIAGLATNAFA. Positions 22-123 are excised as a propeptide; it reads GPIRKVSNAG…VEQDTVVTTY (102 aa). Residues 39-122 enclose the Inhibitor I9 domain; the sequence is KYIVVLKKGL…YVEQDTVVTT (84 aa). One can recognise a Peptidase S8 domain in the interval 130–409; sequence TWGLDRISHE…PNKIAYNGYA (280 aa). Asp164 acts as the Charge relay system in catalysis. Residue Asn178 is glycosylated (N-linked (GlcNAc...) asparagine). His200 functions as the Charge relay system in the catalytic mechanism. Asn252 carries N-linked (GlcNAc...) asparagine glycosylation. Ser353 acts as the Charge relay system in catalysis.

Belongs to the peptidase S8 family.

The protein localises to the secreted. Inhibited by PMSF, SSI, the peptide Phe-Val and by Phe, but not by EDTA. Its function is as follows. Hydrolyzes gelatin, casein, the chromogenic substrate azocoll and the cuticle of the nematode P.redivivus. Immobilizes P.redivivus. The polypeptide is Cuticle-degrading serine protease (Arthrobotrys oligospora (strain ATCC 24927 / CBS 115.81 / DSM 1491) (Nematode-trapping fungus)).